The chain runs to 452 residues: Probable E3 ubiquitin-protein ligase ARI15 (452 aa).

Positions 22–256 (SRVYCGICSN…GTSGSCLAPA (235 aa)) are TRIAD supradomain. 24 residues coordinate Zn(2+): Cys-26, Cys-29, Cys-54, His-56, Cys-59, Cys-62, Cys-83, Cys-88, Cys-128, Cys-133, Cys-154, Cys-156, Cys-161, Cys-164, His-169, Cys-174, Cys-208, Cys-211, Cys-229, Cys-231, Cys-236, Cys-239, His-246, and Cys-252. Residues 26 to 88 (CGICSNIGDD…TAISCPDRDC (63 aa)) form an RING-type 1 zinc finger. An IBR-type zinc finger spans residues 106–174 (AMYELYILKS…MLESHRPVTC (69 aa)). An RING-type 2; atypical zinc finger spans residues 208–239 (CPHCFIPVEIDGERPWAQFLTCVCSGRFCWKC). A RanBP2-type zinc finger spans residues 414–445 (NYGGPYWLCDRCTYGNSWFQRACKMCCDPTAS).

The protein belongs to the RBR family. Ariadne subfamily. It depends on Zn(2+) as a cofactor. Ubiquitous.

The catalysed reaction is [E2 ubiquitin-conjugating enzyme]-S-ubiquitinyl-L-cysteine + [acceptor protein]-L-lysine = [E2 ubiquitin-conjugating enzyme]-L-cysteine + [acceptor protein]-N(6)-ubiquitinyl-L-lysine.. It functions in the pathway protein modification; protein ubiquitination. In terms of biological role, might act as an E3 ubiquitin-protein ligase, or as part of E3 complex, which accepts ubiquitin from specific E2 ubiquitin-conjugating enzymes and then transfers it to substrates. This is Probable E3 ubiquitin-protein ligase ARI15 (ARI15) from Arabidopsis thaliana (Mouse-ear cress).